Here is a 241-residue protein sequence, read N- to C-terminus: L-aspartate dehydrogenase (241 aa).

Positions 109 and 164 each coordinate NAD(+). His193 is an active-site residue.

This sequence belongs to the L-aspartate dehydrogenase family.

It catalyses the reaction L-aspartate + NADP(+) + H2O = oxaloacetate + NH4(+) + NADPH + H(+). It carries out the reaction L-aspartate + NAD(+) + H2O = oxaloacetate + NH4(+) + NADH + H(+). Its pathway is cofactor biosynthesis; NAD(+) biosynthesis; iminoaspartate from L-aspartate (dehydrogenase route): step 1/1. In terms of biological role, specifically catalyzes the NAD or NADP-dependent dehydrogenation of L-aspartate to iminoaspartate. The sequence is that of L-aspartate dehydrogenase from Thermotoga sp. (strain RQ2).